An 87-amino-acid chain; its full sequence is Putative BTB/POZ domain-containing protein At3g29740 (87 aa).

The region spanning 24–87 (VDVRLKAGDS…KHTELVALVE (64 aa)) is the BTB domain.

It functions in the pathway protein modification; protein ubiquitination. Its function is as follows. May act as a substrate-specific adapter of an E3 ubiquitin-protein ligase complex (CUL3-RBX1-BTB) which mediates the ubiquitination and subsequent proteasomal degradation of target proteins. This Arabidopsis thaliana (Mouse-ear cress) protein is Putative BTB/POZ domain-containing protein At3g29740.